A 142-amino-acid polypeptide reads, in one-letter code: Hemoglobin subunit beta (142 aa).

The Globin domain occupies 3 to 142; sequence KLSEDQEHYI…VAEALSSNYH (140 aa). The heme b site is built by H60 and H89.

It belongs to the globin family. Heterotetramer of two alpha chains and two beta chains. Red blood cells.

Involved in oxygen transport from gills to the various peripheral tissues. This Hemitrygon akajei (Red stingray) protein is Hemoglobin subunit beta (HBB).